Reading from the N-terminus, the 231-residue chain is PIAGSMVLAAILLKLGGYGIIRMMQILPTTKTDMFLPFIVLALWGAILANLTCLQQTDLKSLIAYSSVSHMGLVVAAIIIQTPWGLSGAMALMIAHGFTSSALFCLANTTYERTHTRILILTRGFHNILPMTTTWWLLANLMNIATPPTMNFTSELLIMSALFNWCPTTIIMLGLSMLITASYSLHMFLSTQMGYPLLNSQTEPTHTREHLLMILHIIPLAMVSMKPELII.

6 consecutive transmembrane segments (helical) span residues 1–21, 34–54, 63–85, 89–111, 128–148, and 156–176; these read PIAGSMVLAAILLKLGGYGII, MFLPFIVLALWGAILANLTCL, IAYSSVSHMGLVVAAIIIQTPWG, AMALMIAHGFTSSALFCLANTTY, ILPMTTTWWLLANLMNIATPP, and LLIMSALFNWCPTTIIMLGLS.

This sequence belongs to the complex I subunit 4 family.

It is found in the mitochondrion membrane. The enzyme catalyses a ubiquinone + NADH + 5 H(+)(in) = a ubiquinol + NAD(+) + 4 H(+)(out). Functionally, core subunit of the mitochondrial membrane respiratory chain NADH dehydrogenase (Complex I) that is believed to belong to the minimal assembly required for catalysis. Complex I functions in the transfer of electrons from NADH to the respiratory chain. The immediate electron acceptor for the enzyme is believed to be ubiquinone. This is NADH-ubiquinone oxidoreductase chain 4 (MT-ND4) from Trimeresurus stejnegeri (Chinese green tree viper).